We begin with the raw amino-acid sequence, 669 residues long: Alpha-1,4-glucan:maltose-1-phosphate maltosyltransferase 2 (669 aa).

Alpha-maltose 1-phosphate contacts are provided by Lys255, Gln315, and Asp350. Catalysis depends on Asp385, which acts as the Nucleophile. Asn386 is a binding site for alpha-maltose 1-phosphate. Glu414 (proton donor) is an active-site residue. An alpha-maltose 1-phosphate-binding site is contributed by 525–526 (KY).

The protein belongs to the glycosyl hydrolase 13 family. GlgE subfamily. In terms of assembly, homodimer.

The enzyme catalyses alpha-maltose 1-phosphate + [(1-&gt;4)-alpha-D-glucosyl](n) = [(1-&gt;4)-alpha-D-glucosyl](n+2) + phosphate. Its function is as follows. Maltosyltransferase that uses maltose 1-phosphate (M1P) as the sugar donor to elongate linear or branched alpha-(1-&gt;4)-glucans. Maltooligosaccharides with a degree of polymerization (DP) superior or equal to 4 are efficient acceptors, with DP6 being optimal in the GlgE-catalyzed polymerization with M1P. Is probably involved in a branched alpha-glucan biosynthetic pathway from trehalose, together with TreS, Mak and GlgB. The protein is Alpha-1,4-glucan:maltose-1-phosphate maltosyltransferase 2 (glgE2) of Streptomyces coelicolor (strain ATCC BAA-471 / A3(2) / M145).